The sequence spans 426 residues: Mitochondrial distribution and morphology protein 12 (426 aa).

One can recognise an SMP-LTD domain in the interval 1-426; sequence MSIEVDWKTA…VFPSFWTFLI (426 aa). Disordered stretches follow at residues 88–147, 185–264, and 346–370; these read AHGN…GTPG, WTDH…FRFP, and ADDQETRDKDDHPRSGLDPTTSPKR. A compositionally biased stretch (basic and acidic residues) spans 96 to 109; it reads THSELNEPPYRDEV. The segment covering 216–236 has biased composition (low complexity); the sequence is SSNPTSRPSTSSTLPSHPSGS. Composition is skewed to basic and acidic residues over residues 244 to 264 and 349 to 360; these read SHPEEEHLDDPAEPDHPFRFP and QETRDKDDHPRS.

The protein belongs to the MDM12 family. In terms of assembly, component of the ER-mitochondria encounter structure (ERMES) or MDM complex, composed of mmm1, mdm10, mdm12 and mdm34. A mmm1 homodimer associates with one molecule of mdm12 on each side in a pairwise head-to-tail manner, and the SMP-LTD domains of mmm1 and mdm12 generate a continuous hydrophobic tunnel for phospholipid trafficking.

The protein localises to the mitochondrion outer membrane. Its subcellular location is the endoplasmic reticulum membrane. Its function is as follows. Component of the ERMES/MDM complex, which serves as a molecular tether to connect the endoplasmic reticulum (ER) and mitochondria. Components of this complex are involved in the control of mitochondrial shape and protein biogenesis, and function in nonvesicular lipid trafficking between the ER and mitochondria. Mdm12 is required for the interaction of the ER-resident membrane protein mmm1 and the outer mitochondrial membrane-resident beta-barrel protein mdm10. The mdm12-mmm1 subcomplex functions in the major beta-barrel assembly pathway that is responsible for biogenesis of all mitochondrial outer membrane beta-barrel proteins, and acts in a late step after the SAM complex. The mdm10-mdm12-mmm1 subcomplex further acts in the TOM40-specific pathway after the action of the mdm12-mmm1 complex. Essential for establishing and maintaining the structure of mitochondria and maintenance of mtDNA nucleoids. In Aspergillus terreus (strain NIH 2624 / FGSC A1156), this protein is Mitochondrial distribution and morphology protein 12.